The chain runs to 274 residues: Methionine aminopeptidase B (274 aa).

His102 serves as a coordination point for substrate. Positions 120, 131, and 194 each coordinate a divalent metal cation. His201 lines the substrate pocket. The a divalent metal cation site is built by Glu227 and Glu258.

The protein belongs to the peptidase M24A family. Methionine aminopeptidase type 1 subfamily. In terms of assembly, monomer. The cofactor is Co(2+). Requires Zn(2+) as cofactor. Mn(2+) serves as cofactor. Fe(2+) is required as a cofactor.

It carries out the reaction Release of N-terminal amino acids, preferentially methionine, from peptides and arylamides.. Its function is as follows. Removes the N-terminal methionine from nascent proteins. The N-terminal methionine is often cleaved when the second residue in the primary sequence is small and uncharged (Met-Ala-, Cys, Gly, Pro, Ser, Thr, or Val). Requires deformylation of the N(alpha)-formylated initiator methionine before it can be hydrolyzed. This is Methionine aminopeptidase B from Synechocystis sp. (strain ATCC 27184 / PCC 6803 / Kazusa).